A 311-amino-acid polypeptide reads, in one-letter code: Probable manganese-dependent inorganic pyrophosphatase (311 aa).

Mn(2+) contacts are provided by His-9, Asp-13, Asp-15, Asp-77, His-99, and Asp-151.

This sequence belongs to the PPase class C family. It depends on Mn(2+) as a cofactor.

It is found in the cytoplasm. It catalyses the reaction diphosphate + H2O = 2 phosphate + H(+). The polypeptide is Probable manganese-dependent inorganic pyrophosphatase (Streptococcus sanguinis (strain SK36)).